The sequence spans 91 residues: Probable Fe(2+)-trafficking protein (91 aa).

The protein belongs to the Fe(2+)-trafficking protein family.

Could be a mediator in iron transactions between iron acquisition and iron-requiring processes, such as synthesis and/or repair of Fe-S clusters in biosynthetic enzymes. This is Probable Fe(2+)-trafficking protein from Ralstonia nicotianae (strain ATCC BAA-1114 / GMI1000) (Ralstonia solanacearum).